The primary structure comprises 363 residues: MTKQLSTSPKQDGFRMPAEHEPQSAIWMAWPERTDNWRYGAKPAQATFVEVAKAIAKTTPVTMVVSAEQFENARVVLPSYIQVLEMSTDDSWMRDIGPSYVVNDHGKRRGVDWHFNALGQIGDGLYSPWDKDDAVARKVCETLGDDSYRAPIVLEGGSIHVDGEGTLYTTEECLLHPSRNPDLTREEIEDVLKVTLSIEKVIWIPQGLYNDETNGHVDNLIHVVRPGEIALTWCDDETDPQYLISRKAMDVLLTETDAKGRQIKIHKLPMPGPLYISEDEANGVDVSEGMERVPGERLAGSYANYLISNEHIIYPLLDEKHDKDVAMLLAKLYPNYEVTGVNAREILLGGGNIHCITQQIPKV.

The span at 1-10 (MTKQLSTSPK) shows a compositional bias: polar residues. The disordered stretch occupies residues 1–20 (MTKQLSTSPKQDGFRMPAEH). Cys-355 acts as the Amidino-cysteine intermediate in catalysis.

Belongs to the agmatine deiminase family.

It catalyses the reaction agmatine + H2O = N-carbamoylputrescine + NH4(+). The sequence is that of Putative agmatine deiminase from Photobacterium profundum (strain SS9).